The following is a 137-amino-acid chain: Small ribosomal subunit protein uS12 (137 aa).

Disordered stretches follow at residues 1-21 and 36-57; these read MPTINQLVRKPRKSKVEKSDS and TKLSAPQKRGVATRVGTMTPKK. 3-methylthioaspartic acid is present on D102.

This sequence belongs to the universal ribosomal protein uS12 family. As to quaternary structure, part of the 30S ribosomal subunit. Contacts proteins S8 and S17. May interact with IF1 in the 30S initiation complex.

In terms of biological role, with S4 and S5 plays an important role in translational accuracy. Its function is as follows. Interacts with and stabilizes bases of the 16S rRNA that are involved in tRNA selection in the A site and with the mRNA backbone. Located at the interface of the 30S and 50S subunits, it traverses the body of the 30S subunit contacting proteins on the other side and probably holding the rRNA structure together. The combined cluster of proteins S8, S12 and S17 appears to hold together the shoulder and platform of the 30S subunit. The polypeptide is Small ribosomal subunit protein uS12 (Streptococcus agalactiae serotype Ia (strain ATCC 27591 / A909 / CDC SS700)).